The sequence spans 1426 residues: Protein RhsD (1426 aa).

The tract at residues 256–285 (AEEARTSSLSSSDSSRPLSASAFPDTLPGT) is disordered. Positions 262 to 277 (SSLSSSDSSRPLSASA) are enriched in low complexity. Residues 320 to 1197 (YTEAGELLAV…LNEENPHHVY (878 aa)) are 28 X approximate tandem repeats. Repeat copies occupy residues 334–356 (NTQV…HRYA), 357–378 (GRPE…LNPA), 379–421 (GLSY…ELAD), 422–442 (GSVT…TDAA), 443–464 (GRRT…TTPD), 465–485 (GRET…VSPD), 486–506 (GLES…TSRS), 507–529 (GETV…TDAT), 530–550 (GSTR…TDCS), 551–571 (GYQT…HREE), 572–592 (GISL…KDAQ), 593–613 (GRET…ITPD), 614–633 (GNRS…TTQG), 634–654 (GLTR…TNEN), 655–675 (GSHS…GGFD), 676–695 (GRTQ…SEDE), 696–715 (GLVI…RTVN), 716–738 (GEPA…HLSE), 739–762 (GHRV…QTVE), 812–832 (GGTP…VRSF), 833–861 (GSMA…HLNS), 862–882 (LVYD…ISGP), 883–905 (RQTR…LAPD), 906–941 (LDIR…NRIA), 942–970 (EDAH…VIRT), 971–995 (DDER…IQHG), and 996–1030 (EPLV…MSLS). The segment covering 1073–1085 (ENGEREKAQRRSL) has biased composition (basic and acidic residues). The interval 1073–1097 (ENGEREKAQRRSLAETLQQEGSENG) is disordered. Copy 28 of the repeat occupies 1173–1197 (GNTAWSAEYDEWGNQLNEENPHHVY).

Belongs to the RHS family.

In terms of biological role, rhs elements have a nonessential function. They may play an important role in the natural ecology of the cell. In Escherichia coli (strain K12), this protein is Protein RhsD (rhsD).